Here is a 177-residue protein sequence, read N- to C-terminus: Bifunctional protein PyrR (177 aa).

The PRPP-binding signature appears at Val-99–Thr-111.

This sequence belongs to the purine/pyrimidine phosphoribosyltransferase family. PyrR subfamily. As to quaternary structure, homodimer and homohexamer; in equilibrium.

The catalysed reaction is UMP + diphosphate = 5-phospho-alpha-D-ribose 1-diphosphate + uracil. Functionally, regulates transcriptional attenuation of the pyrimidine nucleotide (pyr) operon by binding in a uridine-dependent manner to specific sites on pyr mRNA. This disrupts an antiterminator hairpin in the RNA and favors formation of a downstream transcription terminator, leading to a reduced expression of downstream genes. Also displays a weak uracil phosphoribosyltransferase activity which is not physiologically significant. The polypeptide is Bifunctional protein PyrR (Clostridioides difficile (strain 630) (Peptoclostridium difficile)).